We begin with the raw amino-acid sequence, 294 residues long: Ribosomal protein L11 methyltransferase (294 aa).

The S-adenosyl-L-methionine site is built by Thr147, Gly169, Asp191, and Asn231.

This sequence belongs to the methyltransferase superfamily. PrmA family.

The protein localises to the cytoplasm. The enzyme catalyses L-lysyl-[protein] + 3 S-adenosyl-L-methionine = N(6),N(6),N(6)-trimethyl-L-lysyl-[protein] + 3 S-adenosyl-L-homocysteine + 3 H(+). Methylates ribosomal protein L11. The chain is Ribosomal protein L11 methyltransferase from Dichelobacter nodosus (strain VCS1703A).